A 689-amino-acid chain; its full sequence is Glycine--tRNA ligase beta subunit (689 aa).

It belongs to the class-II aminoacyl-tRNA synthetase family. In terms of assembly, tetramer of two alpha and two beta subunits.

The protein resides in the cytoplasm. The enzyme catalyses tRNA(Gly) + glycine + ATP = glycyl-tRNA(Gly) + AMP + diphosphate. This chain is Glycine--tRNA ligase beta subunit, found in Shigella boydii serotype 4 (strain Sb227).